The following is a 371-amino-acid chain: Protein STRICTOSIDINE SYNTHASE-LIKE 6 (371 aa).

Positions 1–21 (MPVFLSSRFLFFCIIVPLLIS) are cleaved as a signal peptide. Asparagine 101 and asparagine 137 each carry an N-linked (GlcNAc...) asparagine glycan. Residue tyrosine 303 is modified to Phosphotyrosine.

Belongs to the strictosidine synthase family.

The protein resides in the vacuole. This chain is Protein STRICTOSIDINE SYNTHASE-LIKE 6, found in Arabidopsis thaliana (Mouse-ear cress).